The primary structure comprises 134 residues: Cytochrome b5 (134 aa).

Residues 6 to 82 (VKYFTRAEVA…MKQYKVGELV (77 aa)) enclose the Cytochrome b5 heme-binding domain. Residues histidine 41 and histidine 65 each contribute to the heme site. Residues 111-131 (WLMPFVLGLVATLIYKFFFGT) traverse the membrane as a helical segment.

This sequence belongs to the cytochrome b5 family.

The protein localises to the endoplasmic reticulum membrane. The protein resides in the microsome membrane. Cytochrome b5 is a membrane bound hemoprotein which function as an electron carrier for several membrane bound oxygenases. This Musca domestica (House fly) protein is Cytochrome b5 (Cyt-b5).